The sequence spans 165 residues: Methyl-coenzyme M reductase II operon protein D (165 aa).

As to quaternary structure, MCR is composed of three subunits: alpha, beta, and gamma. The function of protein D is not known.

The chain is Methyl-coenzyme M reductase II operon protein D (mrtD) from Methanothermus fervidus (strain ATCC 43054 / DSM 2088 / JCM 10308 / V24 S).